The chain runs to 515 residues: Maturase K (515 aa).

Belongs to the intron maturase 2 family. MatK subfamily.

It localises to the plastid. The protein localises to the chloroplast. Its function is as follows. Usually encoded in the trnK tRNA gene intron. Probably assists in splicing its own and other chloroplast group II introns. This chain is Maturase K, found in Trillium pusillum (Dwarf wakerobin).